We begin with the raw amino-acid sequence, 184 residues long: Ribosome-recycling factor (184 aa).

The protein belongs to the RRF family.

It is found in the cytoplasm. Responsible for the release of ribosomes from messenger RNA at the termination of protein biosynthesis. May increase the efficiency of translation by recycling ribosomes from one round of translation to another. The sequence is that of Ribosome-recycling factor from Borrelia garinii subsp. bavariensis (strain ATCC BAA-2496 / DSM 23469 / PBi) (Borreliella bavariensis).